The following is a 448-amino-acid chain: Probable metal transport system membrane protein CPn_0347/CP_0413/CPj0347/CpB0354 (448 aa).

8 helical membrane passes run 15–35 (FLAV…LLIS), 47–67 (ASYP…SLQA), 69–89 (IFWI…IIVF), 100–120 (SALC…ASYV), 144–164 (FLEA…LWWW), 193–213 (LIFI…VLIS), 233–253 (ILIL…YISV), and 270–290 (LPTG…CLLF).

Belongs to the ABC-3 integral membrane protein family.

The protein resides in the cell inner membrane. Its function is as follows. Part of an ATP-driven transport system CPn_0346/CPn_0347/CPn_0348/CPn_0349 for a metal. The polypeptide is Probable metal transport system membrane protein CPn_0347/CP_0413/CPj0347/CpB0354 (Chlamydia pneumoniae (Chlamydophila pneumoniae)).